Consider the following 354-residue polypeptide: Dihydroorotate dehydrogenase (quinone) (354 aa).

FMN-binding positions include 61–65 (AGYDK) and alanine 85. Lysine 65 is a binding site for substrate. 110–114 (NRFGF) is a substrate binding site. Residues asparagine 139 and asparagine 170 each contribute to the FMN site. Asparagine 170 contributes to the substrate binding site. The Nucleophile role is filled by serine 173. Asparagine 175 lines the substrate pocket. Positions 211 and 239 each coordinate FMN. 240–241 (NT) is a substrate binding site. FMN contacts are provided by residues glycine 261, glycine 290, and 311–312 (YT).

This sequence belongs to the dihydroorotate dehydrogenase family. Type 2 subfamily. As to quaternary structure, monomer. FMN is required as a cofactor.

Its subcellular location is the cell membrane. It carries out the reaction (S)-dihydroorotate + a quinone = orotate + a quinol. It participates in pyrimidine metabolism; UMP biosynthesis via de novo pathway; orotate from (S)-dihydroorotate (quinone route): step 1/1. In terms of biological role, catalyzes the conversion of dihydroorotate to orotate with quinone as electron acceptor. This Cereibacter sphaeroides (strain ATCC 17023 / DSM 158 / JCM 6121 / CCUG 31486 / LMG 2827 / NBRC 12203 / NCIMB 8253 / ATH 2.4.1.) (Rhodobacter sphaeroides) protein is Dihydroorotate dehydrogenase (quinone).